Reading from the N-terminus, the 108-residue chain is Anti-CBASS protein 2 (108 aa).

Residues Gln-4, Tyr-11, and Lys-26 each coordinate 3',3'-cGAMP.

This sequence belongs to the Acb2 family. As to quaternary structure, homohexamer in apo and 3',3'-cGAMP-bound form.

Its function is as follows. Antagonizes CBASS (cyclic oligonucleotide-based antiphage signaling system). Binds and sequesters host-produced 3',3'-cyclic GMP-AMP (cGAMP) (thus preventing host CapV activation) without degrading the cyclic nucleotide. Probably binds some other cyclic dinucleotides as well. This Pseudomonas phage JBD67 protein is Anti-CBASS protein 2.